We begin with the raw amino-acid sequence, 426 residues long: Tol-Pal system protein TolB (426 aa).

An N-terminal signal peptide occupies residues 1–24 (MKLKSRYTSLISVVSIFFSSMVMA).

Belongs to the TolB family. As to quaternary structure, the Tol-Pal system is composed of five core proteins: the inner membrane proteins TolA, TolQ and TolR, the periplasmic protein TolB and the outer membrane protein Pal. They form a network linking the inner and outer membranes and the peptidoglycan layer.

Its subcellular location is the periplasm. Its function is as follows. Part of the Tol-Pal system, which plays a role in outer membrane invagination during cell division and is important for maintaining outer membrane integrity. This is Tol-Pal system protein TolB from Haemophilus ducreyi (strain 35000HP / ATCC 700724).